The following is a 23-amino-acid chain: 48 kDa cell wall protein (23 aa).

The protein localises to the secreted. Its subcellular location is the cell wall. In Nicotiana tabacum (Common tobacco), this protein is 48 kDa cell wall protein.